Reading from the N-terminus, the 219-residue chain is Proline-rich protein 27 (219 aa).

The first 15 residues, methionine 1–alanine 15, serve as a signal peptide directing secretion. Residues alanine 155–alanine 204 show a composition bias toward low complexity. A disordered region spans residues alanine 155–glutamine 219.

The protein resides in the secreted. This is Proline-rich protein 27 (PRR27) from Homo sapiens (Human).